A 497-amino-acid polypeptide reads, in one-letter code: Galactose/methyl galactoside import ATP-binding protein MglA 1 (497 aa).

ABC transporter domains follow at residues 6–243 and 256–494; these read LEMR…VGRD and GKVR…VMSM. 38–45 serves as a coordination point for ATP; it reads GENGAGKS.

This sequence belongs to the ABC transporter superfamily. Galactose/methyl galactoside importer (TC 3.A.1.2.3) family. In terms of assembly, the complex is composed of one ATP-binding protein (MglA), two transmembrane proteins (MglC) and a solute-binding protein (MglB).

It is found in the cell inner membrane. It carries out the reaction D-galactose(out) + ATP + H2O = D-galactose(in) + ADP + phosphate + H(+). The catalysed reaction is methyl beta-D-galactoside(out) + ATP + H2O = methyl beta-D-galactoside(in) + ADP + phosphate + H(+). Its function is as follows. Part of the ABC transporter complex MglABC involved in galactose/methyl galactoside import. Responsible for energy coupling to the transport system. The polypeptide is Galactose/methyl galactoside import ATP-binding protein MglA 1 (Photobacterium profundum (strain SS9)).